A 554-amino-acid polypeptide reads, in one-letter code: Phenylalanine--tRNA ligase beta subunit (554 aa).

In terms of domain architecture, B5 spans 276–351; sequence LTPKSRMISV…INYGYEKFEG (76 aa). Residues Asp329, Asp335, Glu338, and Glu339 each contribute to the Mg(2+) site.

The protein belongs to the phenylalanyl-tRNA synthetase beta subunit family. Type 2 subfamily. As to quaternary structure, tetramer of two alpha and two beta subunits. Mg(2+) serves as cofactor.

The protein localises to the cytoplasm. It carries out the reaction tRNA(Phe) + L-phenylalanine + ATP = L-phenylalanyl-tRNA(Phe) + AMP + diphosphate + H(+). The chain is Phenylalanine--tRNA ligase beta subunit from Methanococcus maripaludis (strain C6 / ATCC BAA-1332).